The following is a 116-amino-acid chain: Large ribosomal subunit protein bL19 (116 aa).

It belongs to the bacterial ribosomal protein bL19 family.

Functionally, this protein is located at the 30S-50S ribosomal subunit interface and may play a role in the structure and function of the aminoacyl-tRNA binding site. This is Large ribosomal subunit protein bL19 from Nocardioides sp. (strain ATCC BAA-499 / JS614).